The primary structure comprises 256 residues: Distal membrane-arm assembly complex protein 2 (256 aa).

Ser-252 carries the post-translational modification Phosphoserine.

This sequence belongs to the ATP synthase subunit s family. As to quaternary structure, interacts with incompletely assembled mitochondrial NADH:ubiquinone oxidoreductase complex (complex I).

It is found in the mitochondrion. In terms of biological role, required for the assembly of the mitochondrial NADH:ubiquinone oxidoreductase complex (complex I). Involved in the assembly of the distal region of complex I. This Macaca fascicularis (Crab-eating macaque) protein is Distal membrane-arm assembly complex protein 2.